A 365-amino-acid polypeptide reads, in one-letter code: uncharacterized protein (365 aa).

Belongs to the mycobacterial PPE family.

This is an uncharacterized protein from Mycobacterium tuberculosis (strain ATCC 25618 / H37Rv).